Consider the following 344-residue polypeptide: Protein RecA (344 aa).

Gly-66–Thr-73 is an ATP binding site.

This sequence belongs to the RecA family.

The protein localises to the cytoplasm. In terms of biological role, can catalyze the hydrolysis of ATP in the presence of single-stranded DNA, the ATP-dependent uptake of single-stranded DNA by duplex DNA, and the ATP-dependent hybridization of homologous single-stranded DNAs. It interacts with LexA causing its activation and leading to its autocatalytic cleavage. The sequence is that of Protein RecA from Methylobacillus flagellatus.